Reading from the N-terminus, the 366-residue chain is Galactoside alpha-(1,2)-fucosyltransferase 1 (366 aa).

The Cytoplasmic portion of the chain corresponds to 1–8 (MWPPSHRQ). A helical; Signal-anchor for type II membrane protein membrane pass occupies residues 9–25 (LCRAFLLVCVFSVISFF). Topologically, residues 26–366 (LHIHQDSFPH…LSPLWTLAKP (341 aa)) are lumenal. 3 N-linked (GlcNAc...) asparagine glycosylation sites follow: Asn66, Asn302, and Asn328.

It belongs to the glycosyltransferase 11 family.

It is found in the golgi apparatus. The protein localises to the golgi stack membrane. It catalyses the reaction a beta-D-galactosyl-(1-&gt;4)-N-acetyl-beta-D-glucosaminyl derivative + GDP-beta-L-fucose = an alpha-L-Fuc-(1-&gt;2)-beta-D-Gal-(1-&gt;4)-beta-D-GlcNAc derivative + GDP + H(+). The catalysed reaction is a ganglioside GA1 + GDP-beta-L-fucose = a ganglioside Fuc-GA1 + GDP + H(+). The enzyme catalyses a beta-D-Gal-(1-&gt;3)-beta-D-GlcNAc-(1-&gt;3)-beta-D-Gal-(1-&gt;4)-beta-D-Glc-(1&lt;-&gt;1')-Cer(d18:1(4E)) + GDP-beta-L-fucose = alpha-L-fucosyl-(1-&gt;2)- beta-D-galactosyl-(1-&gt;3)-N-acetyl-beta-D-glucosaminyl-(1-&gt;3)-beta-D-galactosyl-(1-&gt;4)-beta-D-glucosyl-(1&lt;-&gt;1')-N-acylsphing-4-enine + GDP + H(+). It carries out the reaction a neolactoside nLc4Cer(d18:1(4E)) + GDP-beta-L-fucose = a neolactoside IV(2)-alpha-Fuc-nLc4Cer(d18:1(4E)) + GDP + H(+). It catalyses the reaction a ganglioside GM1 + GDP-beta-L-fucose = a ganglioside Fuc-GM1 + GDP + H(+). The catalysed reaction is beta-D-galactosyl-(1-&gt;3)-N-acetyl-D-galactosamine + GDP-beta-L-fucose = alpha-L-fucosyl-(1-&gt;2)-beta-D-galactosyl-(1-&gt;3)-N-acetyl-D-galactosamine + GDP + H(+). It functions in the pathway protein modification; protein glycosylation. Functionally, catalyzes the transfer of L-fucose, from a guanosine diphosphate-beta-L-fucose, to the terminal galactose residue of glycoconjugates through an alpha(1,2) linkage leading to H antigen synthesis that is an intermediate substrate in the synthesis of ABO blood group antigens. H antigen is essential for maturation of the glomerular layer of the main olfactory bulb, in cell migration and early cell-cell contacts during tumor associated angiogenesis. Preferentially fucosylates soluble lactose and to a lesser extent fucosylates glycolipids gangliosides GA1 and GM1a. The chain is Galactoside alpha-(1,2)-fucosyltransferase 1 from Gorilla gorilla gorilla (Western lowland gorilla).